The following is a 312-amino-acid chain: Structure-specific endonuclease subunit SLX1 (312 aa).

A GIY-YIG domain is found at 9–92 (DFYGCYLLQS…QHGYQTRYIK (84 aa)). Residues 219-282 (CQFCNKIIKH…IPQSPKCPKC (64 aa)) form an SLX1-type zinc finger.

Belongs to the SLX1 family. Forms a heterodimer with SLX4. A divalent metal cation serves as cofactor.

The protein localises to the nucleus. In terms of biological role, catalytic subunit of the SLX1-SLX4 structure-specific endonuclease that resolves DNA secondary structures generated during DNA repair and recombination. Has endonuclease activity towards branched DNA substrates, introducing single-strand cuts in duplex DNA close to junctions with ss-DNA. The sequence is that of Structure-specific endonuclease subunit SLX1 from Candida glabrata (strain ATCC 2001 / BCRC 20586 / JCM 3761 / NBRC 0622 / NRRL Y-65 / CBS 138) (Yeast).